We begin with the raw amino-acid sequence, 78 residues long: UPF0369 protein RF_1112 (78 aa).

This sequence belongs to the SDHAF4 family.

This chain is UPF0369 protein RF_1112, found in Rickettsia felis (strain ATCC VR-1525 / URRWXCal2) (Rickettsia azadi).